The following is a 432-amino-acid chain: Pachytene checkpoint protein 2 homolog (432 aa).

Residue 179 to 186 (GPPGTGKT) participates in ATP binding.

This sequence belongs to the AAA ATPase family. PCH2 subfamily.

Its function is as follows. Plays a key role in chromosome recombination and chromosome structure development during meiosis. Required at early steps in meiotic recombination that leads to non-crossovers pathways. Also needed for efficient completion of homologous synapsis by influencing crossover distribution along the chromosomes affecting both crossovers and non-crossovers pathways. The protein is Pachytene checkpoint protein 2 homolog (trip13) of Xenopus tropicalis (Western clawed frog).